A 137-amino-acid chain; its full sequence is Small ribosomal subunit protein uS9c (137 aa).

Belongs to the universal ribosomal protein uS9 family.

The protein resides in the plastid. The protein localises to the chloroplast. The sequence is that of Small ribosomal subunit protein uS9c (rps9) from Chlorella vulgaris (Green alga).